A 704-amino-acid chain; its full sequence is Nucleolar and coiled-body phosphoprotein 1 (704 aa).

A LisH domain is found at 10-42 (VPSDLYPLVLGFLRDNQLSEVASKFAKATGATQ). The residue at position 33 (lysine 33) is an N6-acetyllysine. Positions 65 to 638 (KVKLQSNGPV…PFRRVREEEI (574 aa)) are disordered. Glycyl lysine isopeptide (Lys-Gly) (interchain with G-Cter in SUMO2) cross-links involve residues lysine 67 and lysine 76. Acidic serine cluster repeat units follow at residues 84-95 (SSDSSEDSSEEE) and 127-138 (ESSSSEESSEEE). The 11 X 12 AA approximate repeats of an acidic serine cluster stretch occupies residues 84-570 (SSDSSEDSSE…GKAGKESEEE (487 aa)). Serine 87, serine 88, serine 91, and serine 92 each carry phosphoserine. Acidic residues predominate over residues 87-96 (SSEDSSEEED). Residues serine 88 and serine 91 each carry the diphosphoserine modification. 2 stretches are compositionally biased toward low complexity: residues 120–132 (KAAAKASESSSSE) and 149–160 (QQKAVKPQAKAV). An Acidic serine cluster 3 repeat occupies 170 to 181 (SESESDSSSEDE). Acidic residues predominate over residues 170-182 (SESESDSSSEDEA). 3 stretches are compositionally biased toward low complexity: residues 183–207 (PQTQKPKAAATAAKAPTKAQTKAPA), 215–236 (AQPKAANGKAGSSSSSSSSSSS), and 246–279 (AAPLKKTAPKKQVVAKAPVKVTAAPTQKSSSSED). Residues lysine 189 and lysine 200 each participate in a glycyl lysine isopeptide (Lys-Gly) (interchain with G-Cter in SUMO2) cross-link. 3 Acidic serine cluster repeats span residues 231–242 (SSSSSSDDSEEE), 274–285 (SSSSEDSSSEEE), and 335–346 (SSEESDSSSEEE). Residues lysine 352 and lysine 357 each participate in a glycyl lysine isopeptide (Lys-Gly) (interchain with G-Cter in SUMO2) cross-link. Serine 372, serine 373, and serine 376 each carry phosphoserine. An Acidic serine cluster 7 repeat occupies 373 to 384 (SDSSDSDSSEDE). Residues lysine 399, lysine 405, lysine 410, and lysine 416 each participate in a glycyl lysine isopeptide (Lys-Gly) (interchain with G-Cter in SUMO2) cross-link. Over residues 408–419 (AAKAVATPKQPA) the composition is skewed to low complexity. Residue lysine 424 is modified to N6-acetyllysine; alternate. Lysine 424 is covalently cross-linked (Glycyl lysine isopeptide (Lys-Gly) (interchain with G-Cter in SUMO1); alternate). Lysine 424 is covalently cross-linked (Glycyl lysine isopeptide (Lys-Gly) (interchain with G-Cter in SUMO2); alternate). The segment covering 434 to 444 (SSEEESSSSEE) has biased composition (acidic residues). One copy of the Acidic serine cluster 8 repeat lies at 434–445 (SSEEESSSSEEE). Glycyl lysine isopeptide (Lys-Gly) (interchain with G-Cter in SUMO2) cross-links involve residues lysine 449 and lysine 461. Position 465 is a phosphoserine (serine 465). Composition is skewed to low complexity over residues 474–485 (AGGDSSSDSESS) and 504–529 (AGAAVPKPTPVKKAAAESSSSSSSSE). An Acidic serine cluster 9 repeat occupies 479 to 490 (SSDSESSSSEEE). Residue lysine 510 forms a Glycyl lysine isopeptide (Lys-Gly) (interchain with G-Cter in SUMO2) linkage. 2 Acidic serine cluster repeats span residues 524–535 (SSSSSEDSSEEE) and 559–570 (QNGKAGKESEEE). A Phosphoserine modification is found at serine 567. Lysine 584 is covalently cross-linked (Glycyl lysine isopeptide (Lys-Gly) (interchain with G-Cter in SUMO2)). The residue at position 587 (serine 587) is a Phosphoserine. Residue threonine 596 is modified to Phosphothreonine. Lysine 609 participates in a covalent cross-link: Glycyl lysine isopeptide (Lys-Gly) (interchain with G-Cter in SUMO2). Phosphothreonine is present on residues threonine 612 and threonine 615. A Glycyl lysine isopeptide (Lys-Gly) (interchain with G-Cter in SUMO2) cross-link involves residue lysine 618. Residues serine 627 and serine 648 each carry the phosphoserine modification. Lysine 652 is covalently cross-linked (Glycyl lysine isopeptide (Lys-Gly) (interchain with G-Cter in SUMO2)). The residue at position 668 (lysine 668) is an N6-acetyllysine; alternate. A Glycyl lysine isopeptide (Lys-Gly) (interchain with G-Cter in SUMO2); alternate cross-link involves residue lysine 668. Residue arginine 688 is modified to Omega-N-methylarginine. The residue at position 691 (serine 691) is a Phosphoserine. A Glycyl lysine isopeptide (Lys-Gly) (interchain with G-Cter in SUMO2) cross-link involves residue lysine 700. At serine 703 the chain carries Phosphoserine.

The protein belongs to the NOLC1 family. Interacts with RNA polymerase I 194 kDa subunit (RPA194) and with casein kinase-II. Interacts with DKC1/NAP57, NOP58 and fibrillarin. In terms of processing, undergoes rapid and massive phosphorylation/dephosphorylation cycles on CK2 and PKC sites. NOLC1 is one of the mostly phosphorylated proteins in the cell. Post-translationally, ubiquitinated. Monoubiquitination by the BCR(KBTBD8) complex promotes the formation of a NOLC1-TCOF1 complex that acts as a platform to connect RNA polymerase I with enzymes responsible for ribosomal processing and modification, leading to remodel the translational program of differentiating cells in favor of neural crest specification. Pyrophosphorylated by 5-diphosphoinositol pentakisphosphate (5-IP7). Serine pyrophosphorylation is achieved by Mg(2+)-dependent, but enzyme independent transfer of a beta-phosphate from a inositol pyrophosphate to a pre-phosphorylated serine residue.

The protein resides in the cytoplasm. The protein localises to the nucleus. It is found in the nucleolus. Its function is as follows. Nucleolar protein that acts as a regulator of RNA polymerase I by connecting RNA polymerase I with enzymes responsible for ribosomal processing and modification. Required for neural crest specification: following monoubiquitination by the BCR(KBTBD8) complex, associates with TCOF1 and acts as a platform to connect RNA polymerase I with enzymes responsible for ribosomal processing and modification, leading to remodel the translational program of differentiating cells in favor of neural crest specification. Involved in nucleologenesis, possibly by playing a role in the maintenance of the fundamental structure of the fibrillar center and dense fibrillar component in the nucleolus. It has intrinsic GTPase and ATPase activities. The protein is Nucleolar and coiled-body phosphoprotein 1 of Rattus norvegicus (Rat).